Reading from the N-terminus, the 904-residue chain is Protein translocase subunit SecA (904 aa).

ATP-binding positions include Gln-87, 105–109, and Asp-507; that span reads GEGKT. The segment at 865–887 is disordered; sequence GEGAEAAGQQPADAGPKIGRNDP. Residues 868–880 show a composition bias toward low complexity; that stretch reads AEAAGQQPADAGP. Residues Cys-888, Cys-890, Cys-899, and His-900 each coordinate Zn(2+).

Belongs to the SecA family. As to quaternary structure, monomer and homodimer. Part of the essential Sec protein translocation apparatus which comprises SecA, SecYEG and auxiliary proteins SecDF-YajC and YidC. Zn(2+) is required as a cofactor.

It is found in the cell inner membrane. The protein localises to the cytoplasm. The enzyme catalyses ATP + H2O + cellular proteinSide 1 = ADP + phosphate + cellular proteinSide 2.. Functionally, part of the Sec protein translocase complex. Interacts with the SecYEG preprotein conducting channel. Has a central role in coupling the hydrolysis of ATP to the transfer of proteins into and across the cell membrane, serving both as a receptor for the preprotein-SecB complex and as an ATP-driven molecular motor driving the stepwise translocation of polypeptide chains across the membrane. The sequence is that of Protein translocase subunit SecA from Dechloromonas aromatica (strain RCB).